The primary structure comprises 299 residues: Large ribosomal subunit protein uL18 (299 aa).

The protein belongs to the universal ribosomal protein uL18 family. In terms of assembly, component of the large ribosomal subunit (LSU).

The protein resides in the cytoplasm. It is found in the nucleus. Component of the ribosome, a large ribonucleoprotein complex responsible for the synthesis of proteins in the cell. The small ribosomal subunit (SSU) binds messenger RNAs (mRNAs) and translates the encoded message by selecting cognate aminoacyl-transfer RNA (tRNA) molecules. The large subunit (LSU) contains the ribosomal catalytic site termed the peptidyl transferase center (PTC), which catalyzes the formation of peptide bonds, thereby polymerizing the amino acids delivered by tRNAs into a polypeptide chain. The nascent polypeptides leave the ribosome through a tunnel in the LSU and interact with protein factors that function in enzymatic processing, targeting, and the membrane insertion of nascent chains at the exit of the ribosomal tunnel. This Bombyx mori (Silk moth) protein is Large ribosomal subunit protein uL18 (RpL5).